A 396-amino-acid chain; its full sequence is Tryptophan synthase beta chain (396 aa).

Lysine 86 carries the post-translational modification N6-(pyridoxal phosphate)lysine.

The protein belongs to the TrpB family. As to quaternary structure, tetramer of two alpha and two beta chains. Pyridoxal 5'-phosphate is required as a cofactor.

It carries out the reaction (1S,2R)-1-C-(indol-3-yl)glycerol 3-phosphate + L-serine = D-glyceraldehyde 3-phosphate + L-tryptophan + H2O. It functions in the pathway amino-acid biosynthesis; L-tryptophan biosynthesis; L-tryptophan from chorismate: step 5/5. Its function is as follows. The beta subunit is responsible for the synthesis of L-tryptophan from indole and L-serine. The sequence is that of Tryptophan synthase beta chain from Sodalis glossinidius (strain morsitans).